A 157-amino-acid chain; its full sequence is Snaclec 3 (157 aa).

The signal sequence occupies residues 1–23 (MGRLIFLSFGWLVVFLSLSGTGA). Intrachain disulfides connect Cys-27/Cys-38, Cys-55/Cys-153, and Cys-128/Cys-145. Positions 34–154 (YGQHCYRAFS…CAGHYPFICK (121 aa)) constitute a C-type lectin domain.

Belongs to the snaclec family. In terms of assembly, heterodimer; disulfide-linked. In terms of tissue distribution, expressed by the venom gland.

It localises to the secreted. Interferes with one step of hemostasis (modulation of platelet aggregation, or coagulation cascade, for example). The chain is Snaclec 3 from Bitis gabonica (Gaboon adder).